The primary structure comprises 78 residues: Putative snRNP Sm-like protein (78 aa).

In terms of domain architecture, Sm spans 4–76 (RPLDVIHRSL…VLAISPVDVG (73 aa)).

It belongs to the snRNP Sm proteins family.

This is Putative snRNP Sm-like protein from Thermococcus onnurineus (strain NA1).